We begin with the raw amino-acid sequence, 273 residues long: Putative phosphoenolpyruvate synthase regulatory protein (273 aa).

153-160 (AVSRAGKT) contributes to the ADP binding site.

It belongs to the pyruvate, phosphate/water dikinase regulatory protein family. PSRP subfamily.

The enzyme catalyses [pyruvate, water dikinase] + ADP = [pyruvate, water dikinase]-phosphate + AMP + H(+). The catalysed reaction is [pyruvate, water dikinase]-phosphate + phosphate + H(+) = [pyruvate, water dikinase] + diphosphate. In terms of biological role, bifunctional serine/threonine kinase and phosphorylase involved in the regulation of the phosphoenolpyruvate synthase (PEPS) by catalyzing its phosphorylation/dephosphorylation. This Xanthomonas campestris pv. campestris (strain ATCC 33913 / DSM 3586 / NCPPB 528 / LMG 568 / P 25) protein is Putative phosphoenolpyruvate synthase regulatory protein.